A 325-amino-acid polypeptide reads, in one-letter code: uncharacterized protein (325 aa).

Residues 108 to 141 form a disordered region; it reads PHRTQGISSTSSKSSKGGKKTPVRSTPKEIKKAT.

This is an uncharacterized protein from Homo sapiens (Human).